A 147-amino-acid polypeptide reads, in one-letter code: Small ribosomal subunit protein uS12 (147 aa).

It belongs to the universal ribosomal protein uS12 family. Part of the 30S ribosomal subunit.

With S4 and S5 plays an important role in translational accuracy. Located at the interface of the 30S and 50S subunits. The polypeptide is Small ribosomal subunit protein uS12 (Methanococcus aeolicus (strain ATCC BAA-1280 / DSM 17508 / OCM 812 / Nankai-3)).